Reading from the N-terminus, the 241-residue chain is 7-cyano-7-deazaguanine synthase (241 aa).

Position 15–25 (15–25 (FSGGQDSTTTL)) interacts with ATP. Zn(2+) contacts are provided by C203, C218, C221, and C224.

It belongs to the QueC family. It depends on Zn(2+) as a cofactor.

It carries out the reaction 7-carboxy-7-deazaguanine + NH4(+) + ATP = 7-cyano-7-deazaguanine + ADP + phosphate + H2O + H(+). It participates in purine metabolism; 7-cyano-7-deazaguanine biosynthesis. Functionally, catalyzes the ATP-dependent conversion of 7-carboxy-7-deazaguanine (CDG) to 7-cyano-7-deazaguanine (preQ(0)). The chain is 7-cyano-7-deazaguanine synthase from Azorhizobium caulinodans (strain ATCC 43989 / DSM 5975 / JCM 20966 / LMG 6465 / NBRC 14845 / NCIMB 13405 / ORS 571).